Reading from the N-terminus, the 204-residue chain is Protein Mis18-alpha (204 aa).

3 positions are modified to phosphoserine: Ser13, Ser16, and Ser17. Positions 51–149 constitute a Mis18 domain; that stretch reads PLVFLCARCR…SVEAVESYTL (99 aa). The Zn(2+) site is built by Cys56, Cys59, Cys112, and Cys115. Lys133 is covalently cross-linked (Glycyl lysine isopeptide (Lys-Gly) (interchain with G-Cter in SUMO2)). Residue Ser204 is modified to Phosphoserine.

The protein belongs to the mis18 family. In terms of assembly, homodimer, and heterodimer with OIP5/MIS18B. Identified in a complex containing MIS18A, OIP5/MIS18B, MIS18BP1, RBBP7 and RBBP4.

It localises to the nucleus. Its subcellular location is the chromosome. The protein localises to the centromere. In terms of biological role, required for recruitment of CENPA to centromeres and normal chromosome segregation during mitosis. This chain is Protein Mis18-alpha (Mis18a), found in Mus musculus (Mouse).